Reading from the N-terminus, the 595-residue chain is Putative lipase atg15 (595 aa).

The Cytoplasmic segment spans residues 1–20; the sequence is MKGLRGHNKKSFWGNTRLSD. The helical; Signal-anchor for type II membrane protein transmembrane segment at 21–41 threads the bilayer; that stretch reads LLWPVTLLPGLISAYQPVYLG. The Lumenal portion of the chain corresponds to 42–595; it reads SRQSSPFLPP…TTTGKHLGRF (554 aa). N-linked (GlcNAc...) asparagine glycosylation is found at Asn164, Asn199, Asn221, Asn279, and Asn303. The active-site Charge relay system is the Ser319. Residue Asn465 is glycosylated (N-linked (GlcNAc...) asparagine).

The protein belongs to the AB hydrolase superfamily. Lipase family. As to quaternary structure, binds to both phosphatidylinositol (PI) and phosphatidylinositol 3,5-bisphosphate (PIP2).

The protein resides in the endosome. It is found in the multivesicular body membrane. Its subcellular location is the prevacuolar compartment membrane. The enzyme catalyses a triacylglycerol + H2O = a diacylglycerol + a fatty acid + H(+). Lipase which is essential for lysis of subvacuolar cytoplasm to vacuole targeted bodies and intravacuolar autophagic bodies. Involved in the lysis of intravacuolar multivesicular body (MVB) vesicles. The intravacuolar membrane disintegration by atg15 is critical to life span extension. The polypeptide is Putative lipase atg15 (atg15) (Aspergillus niger (strain ATCC MYA-4892 / CBS 513.88 / FGSC A1513)).